Reading from the N-terminus, the 190-residue chain is Xanthine phosphoribosyltransferase 2 (190 aa).

Xanthine is bound by residues L20 and N27. 129-133 (ANGCA) provides a ligand contact to 5-phospho-alpha-D-ribose 1-diphosphate. Position 157 (K157) interacts with xanthine.

Belongs to the purine/pyrimidine phosphoribosyltransferase family. Xpt subfamily. In terms of assembly, homodimer.

Its subcellular location is the cytoplasm. It catalyses the reaction XMP + diphosphate = xanthine + 5-phospho-alpha-D-ribose 1-diphosphate. The protein operates within purine metabolism; XMP biosynthesis via salvage pathway; XMP from xanthine: step 1/1. Its function is as follows. Converts the preformed base xanthine, a product of nucleic acid breakdown, to xanthosine 5'-monophosphate (XMP), so it can be reused for RNA or DNA synthesis. This chain is Xanthine phosphoribosyltransferase 2, found in Clostridium botulinum (strain Langeland / NCTC 10281 / Type F).